Consider the following 414-residue polypeptide: Transcriptional repressor protein YY1 (414 aa).

An interaction with the SMAD1/SMAD4 complex region spans residues 1 to 170; the sequence is MASGDTLYIA…GGGSSSSGGG (170 aa). A disordered region spans residues 33 to 81; it reads VETIETTVVGEEEEEDDDDEDGGGGDHGGGGGHGHAGHHHHHHHHHHHP. Residues 42-55 show a composition bias toward acidic residues; the sequence is GEEEEEDDDDEDGG. Over residues 57-66 the composition is skewed to gly residues; sequence GDHGGGGGHG. Residues 67–81 show a composition bias toward basic residues; it reads HAGHHHHHHHHHHHP. The tract at residues 116-260 is gly-rich region involved in interaction with HCFC1; the sequence is DDSDGLRAED…YSEYMTGKKL (145 aa). Ser118 is subject to Phosphoserine; by CK2. The segment at 157–203 is disordered; it reads GKSGGGGSSSSGGGRVKKGGGKKSGKKSYLSGGAGAAGGGGADPGNK. The segment covering 158-170 has biased composition (gly residues); that stretch reads KSGGGGSSSSGGG. Basic residues predominate over residues 171-182; that stretch reads RVKKGGGKKSGK. Residues Lys182 and Lys183 each participate in a glycyl lysine isopeptide (Lys-Gly) (interchain with G-Cter in SUMO2) cross-link. Ser187 carries the phosphoserine modification. The span at 188-199 shows a compositional bias: gly residues; it reads GGAGAAGGGGAD. Glycyl lysine isopeptide (Lys-Gly) (interchain with G-Cter in SUMO2) cross-links involve residues Lys208 and Lys230. The residue at position 247 (Ser247) is a Phosphoserine. An involved in nuclear matrix association region spans residues 257–341; sequence GKKLPPGGIP…KAFVESSKLK (85 aa). Residues Lys286 and Lys288 each participate in a glycyl lysine isopeptide (Lys-Gly) (interchain with G-Cter in SUMO2) cross-link. Residues 295 to 414 are binding to DNA; sequence TIACPHKGCT…LTHAKAKNNQ (120 aa). 3 C2H2-type zinc fingers span residues 296-320, 325-347, and 353-377; these read IACPHKGCTKMFRDNSAMRKHLHTH, HVCAECGKAFVESSKLKRHQLVH, and FQCTFEGCGKRFSLDFNLRTHVRIH. Residues Cys298, Cys303, His316, His320, Cys327, Cys330, His343, His347, Cys355, Cys360, His373, and His377 each contribute to the Zn(2+) site. The interval 333-371 is involved in repression of activated transcription; the sequence is AFVESSKLKRHQLVHTGEKPFQCTFEGCGKRFSLDFNLR. Residues 371-397 form an involved in masking transactivation domain region; the sequence is RTHVRIHTGDRPYVCPFDGCNKKFAQS. Thr378 carries the post-translational modification Phosphothreonine. Residues 383–407 form a C2H2-type 4 zinc finger; that stretch reads YVCPFDGCNKKFAQSTNLKSHILTH. Cys385, Cys390, His403, and His407 together coordinate Zn(2+). Residues Lys409 and Lys411 each participate in a glycyl lysine isopeptide (Lys-Gly) (interchain with G-Cter in SUMO2) cross-link.

It belongs to the YY transcription factor family. In terms of assembly, interacts with YAF2 through the region encompassing the first and second zinc fingers. Component of the chromatin remodeling INO80 complex; specifically part of a complex module associated with the DBINO domain of INO80. Interacts with EED and EZH2; the interactions are indicative for an association with the PRC2/EED-EZH2 complex. Interacts with SFMBT2. Found in a complex with SMAD1 and SMAD4. Found in a complex with YY1, SIN3A and HDAC1. Accessory component of the polycomb repressive deubiquitinase (PR-DUB) complex, at least composed of BAP1, one of ASXL1, ASXL2 or (probably) ASXL3 and one of MBD5 or MBD6; the PR-DUB core associates with a number of accessory proteins, including FOXK1, FOXK2, KDM1B, HCFC1, YY1 and OGT. Interacts (via Gly-rich region) with HCFC1; the interaction is direct. Interacts (via C-terminal zinc-finger domains) with BAP1 (via ULD domain); the interaction is direct and requires HCFC1. Post-translationally, phosphorylation at Ser-118 by CK2 prevents proteolytic cleavage by caspase-7 (CASP7) during apoptosis. Proteolytically cleaved by caspase-7 (CASP7) in response to apoptosis. Phosphorylation at Ser-118 protects against proteolytic cleavage. In terms of processing, transiently poly-ADP-ribosylated by PARP1 upon DNA damage, with the effect of decreasing affinity of YY1 to its cognate DNA binding sites. Post-translationally, ubiquitinated.

The protein localises to the nucleus matrix. Functionally, multifunctional transcription factor that exhibits positive and negative control on a large number of cellular and viral genes by binding to sites overlapping the transcription start site. Binds to the consensus sequence 5'-CCGCCATNTT-3'; some genes have been shown to contain a longer binding motif allowing enhanced binding; the initial CG dinucleotide can be methylated greatly reducing the binding affinity. The effect on transcription regulation is depending upon the context in which it binds and diverse mechanisms of action include direct activation or repression, indirect activation or repression via cofactor recruitment, or activation or repression by disruption of binding sites or conformational DNA changes. Its activity is regulated by transcription factors and cytoplasmic proteins that have been shown to abrogate or completely inhibit YY1-mediated activation or repression. For example, it acts as a repressor in absence of adenovirus E1A protein but as an activator in its presence. Acts synergistically with the SMAD1 and SMAD4 in bone morphogenetic protein (BMP)-mediated cardiac-specific gene expression. Binds to SMAD binding elements (SBEs) (5'-GTCT/AGAC-3') within BMP response element (BMPRE) of cardiac activating regions. May play an important role in development and differentiation. Proposed to recruit the PRC2/EED-EZH2 complex to target genes that are transcriptional repressed. Involved in DNA repair. In vitro, binds to DNA recombination intermediate structures (Holliday junctions). Plays a role in regulating enhancer activation. Recruits the PR-DUB complex to specific gene-regulatory regions. Its function is as follows. Proposed core component of the chromatin remodeling INO80 complex which is involved in transcriptional regulation, DNA replication and probably DNA repair; proposed to target the INO80 complex to YY1-responsive elements. This is Transcriptional repressor protein YY1 (YY1) from Homo sapiens (Human).